The sequence spans 107 residues: uncharacterized protein (107 aa).

Disordered regions lie at residues 51–75 and 88–107; these read VQRS…TQSA and NPTP…APEP. The span at 63 to 75 shows a compositional bias: polar residues; that stretch reads NGNQGSAIPTQSA.

This is an uncharacterized protein from Fowl adenovirus A serotype 1 (strain CELO / Phelps) (FAdV-1).